We begin with the raw amino-acid sequence, 212 residues long: Stromal cell-derived factor 2-like protein (212 aa).

An N-terminal signal peptide occupies residues 1–19 (MKSLFLILILCITIPLIFA). Asn20 carries N-linked (GlcNAc...) asparagine glycosylation. 3 consecutive MIR domains span residues 29 to 86 (ITKV…IKGP), 94 to 149 (GTVV…VETE), and 151 to 206 (GKEW…TEEG).

It localises to the secreted. This Dictyostelium discoideum (Social amoeba) protein is Stromal cell-derived factor 2-like protein.